Reading from the N-terminus, the 113-residue chain is Hydrogenase maturation factor HybF (113 aa).

Ni(2+) contacts are provided by histidine 2 and glutamate 3. Residues cysteine 73, cysteine 76, cysteine 89, and cysteine 92 each contribute to the Zn(2+) site.

Belongs to the HypA/HybF family. HybF subfamily. Monomer.

In terms of biological role, involved in the maturation of [NiFe] hydrogenases. Required for nickel insertion into the metal center of the hydrogenase. HybF is involved in maturation of hydrogenases 1 and 2. It may partially substitute for the function of HypA and vice versa. This chain is Hydrogenase maturation factor HybF, found in Escherichia coli (strain K12).